The following is a 266-amino-acid chain: Undecaprenyl-diphosphatase (266 aa).

The next 8 helical transmembrane spans lie at 1 to 21, 39 to 59, 87 to 107, 111 to 131, 149 to 169, 183 to 203, 218 to 238, and 246 to 266; these read METF…FLPI, QGFS…VIYF, WWII…KDFI, LRNT…LWWA, ALLI…RSGA, AAAK…AILV, ALGI…YYFL, and MTPF…LILW.

This sequence belongs to the UppP family.

It localises to the cell inner membrane. It carries out the reaction di-trans,octa-cis-undecaprenyl diphosphate + H2O = di-trans,octa-cis-undecaprenyl phosphate + phosphate + H(+). Catalyzes the dephosphorylation of undecaprenyl diphosphate (UPP). Confers resistance to bacitracin. This is Undecaprenyl-diphosphatase from Shewanella denitrificans (strain OS217 / ATCC BAA-1090 / DSM 15013).